We begin with the raw amino-acid sequence, 304 residues long: Dipeptide transport system permease protein DppC (304 aa).

Residues 1-24 (MKTEHAKPLMTPEPNSPPPEDQYT) are disordered. Transmembrane regions (helical) follow at residues 41–61 (LAIVGLIIITSFILIAIFAPL), 108–128 (VGFFAVTGALIFGTTLGLIAG), 141–161 (IFDIMLAFPSILLAIAIVAIL), 164–184 (SLQNALIAIAIVNVPIFGRLV), 227–247 (ATLGFGTAILEAAALGFLGLG), and 271–291 (WTVLFPGFSIMLVVLGFNMIG). The ABC transmembrane type-1 domain maps to 102–291 (ARLSLQVGFF…LVVLGFNMIG (190 aa)).

The protein belongs to the binding-protein-dependent transport system permease family. OppBC subfamily.

The protein resides in the cell membrane. In terms of biological role, probably part of the ABC transporter Dpp involved in dipeptide transport. Responsible for the translocation of the substrate across the membrane. The polypeptide is Dipeptide transport system permease protein DppC (dppC) (Alkalihalophilus pseudofirmus (strain ATCC BAA-2126 / JCM 17055 / OF4) (Bacillus pseudofirmus)).